An 84-amino-acid polypeptide reads, in one-letter code: Large ribosomal subunit protein bL27 (84 aa).

The tract at residues 1 to 20 is disordered; sequence MAHKKAGGSTRNGRDSNPKY.

Belongs to the bacterial ribosomal protein bL27 family.

This chain is Large ribosomal subunit protein bL27, found in Francisella tularensis subsp. tularensis (strain FSC 198).